Reading from the N-terminus, the 91-residue chain is MARNVFCAYLKQEAEGLDFQLYPGELGKRIFDSISKQAWAEWIKKQTMLVNEKKLNMMNPEHRQLLETEMVNFLFEGKEVHIEGYVPVESK.

The protein belongs to the Fe(2+)-trafficking protein family.

Functionally, could be a mediator in iron transactions between iron acquisition and iron-requiring processes, such as synthesis and/or repair of Fe-S clusters in biosynthetic enzymes. The polypeptide is Probable Fe(2+)-trafficking protein (Glaesserella parasuis serovar 5 (strain SH0165) (Haemophilus parasuis)).